The chain runs to 117 residues: Protein OPG035 (117 aa).

Belongs to the poxviridae OPG035 family.

Bcl-2-like protein which contributes to virulence by preventing host NF-kappa-B activation in response to pro-inflammatory stimuli such as TNF-alpha or IL1B. This chain is Protein OPG035 (OPG035), found in Monkeypox virus.